The following is a 241-amino-acid chain: Uridylate kinase (241 aa).

An ATP-binding site is contributed by 15 to 18; the sequence is KLSG. Residues 23–28 are involved in allosteric activation by GTP; the sequence is GSEGFG. Gly57 is a binding site for UMP. Residues Gly58 and Arg62 each coordinate ATP. UMP contacts are provided by residues Asp77 and 138–145; that span reads TGNPFCTT. Residues Thr165, Tyr171, and Asp174 each contribute to the ATP site.

Belongs to the UMP kinase family. Homohexamer.

It is found in the cytoplasm. It carries out the reaction UMP + ATP = UDP + ADP. It participates in pyrimidine metabolism; CTP biosynthesis via de novo pathway; UDP from UMP (UMPK route): step 1/1. Its activity is regulated as follows. Allosterically activated by GTP. Inhibited by UTP. Its function is as follows. Catalyzes the reversible phosphorylation of UMP to UDP. This Shewanella amazonensis (strain ATCC BAA-1098 / SB2B) protein is Uridylate kinase.